The sequence spans 461 residues: Chromosomal replication initiator protein DnaA (461 aa).

The segment at 1–87 (MAVSLWQQCI…IGSRPSAKPV (87 aa)) is domain I, interacts with DnaA modulators. The tract at residues 87–124 (VVQATAAVRTSRPVTREVTKPSFNTPHAEPMANANHRS) is domain II. The disordered stretch occupies residues 99–125 (PVTREVTKPSFNTPHAEPMANANHRSN). The interval 125–341 (NINPTYQFDN…GALNRVIANA (217 aa)) is domain III, AAA+ region. 4 residues coordinate ATP: G169, G171, K172, and T173. The segment at 342–461 (NFTGRPITID…YANLIRTLSS (120 aa)) is domain IV, binds dsDNA.

This sequence belongs to the DnaA family. Oligomerizes as a right-handed, spiral filament on DNA at oriC.

The protein resides in the cytoplasm. In terms of biological role, plays an essential role in the initiation and regulation of chromosomal replication. ATP-DnaA binds to the origin of replication (oriC) to initiate formation of the DNA replication initiation complex once per cell cycle. Binds the DnaA box (a 9 base pair repeat at the origin) and separates the double-stranded (ds)DNA. Forms a right-handed helical filament on oriC DNA; dsDNA binds to the exterior of the filament while single-stranded (ss)DNA is stabiized in the filament's interior. The ATP-DnaA-oriC complex binds and stabilizes one strand of the AT-rich DNA unwinding element (DUE), permitting loading of DNA polymerase. After initiation quickly degrades to an ADP-DnaA complex that is not apt for DNA replication. Binds acidic phospholipids. This chain is Chromosomal replication initiator protein DnaA, found in Shewanella pealeana (strain ATCC 700345 / ANG-SQ1).